The following is a 724-amino-acid chain: MNLQELLAKVPLLLSYPTIILSSNLIVPSHNDLISRAASTSAAEYADEKLIFFSTDHAIRLIFLPTFVASSFNLFAHYFNFINYSSRRKYYVLFTAIYFLSILTAIFHPIQSTCITLLIIKLLTTADESSPKIALNFKTILKTFVPFITLTLVILRWDPSFDASSGDVNKISTSLAAYALLILTLRYASPLILSTLSSSIGVVSKDTSVAQHSISRNKRFPLILVLPIFSFVLLYLMTIVNKTYNIQLLMVFVFFGCLSIFFLSLKDLFTEDGNQKKGGQEDEYCRMFDIKYMISYLWLTRFTILLTGIMAIVVHFLSFNEITSSIKTDLLSLLFVVVAEYVSSFSNKQPDSHSHNHAHHHSHLTDSLPLENESMFKQMALNKDTRSIFSFLLLNTAFMFVQLLYSFRSKSLGLLSDSLHMALDCTSLLLGLIAGVLTKKPASDKFPFGLNYLGTLAGFTNGVLLLGIVCGIFVEAIERIFNPIHLHATNELLVVATLGLLVNLVGLFAFDHGAHDHGGTDNENMKGIFLHILADTLGSVGVVISTLLIKLTHWPIFDPIASLLIGSLILLSALPLLKSTSANILLRLDDKKHNLVKSALNQISTTPGITGYTTPRFWPTESGSSGHSHAHTHSHAENHSHEHHHDQKNGSQEHPSLVGYIHVQYVDGENSTIIKKRVEKIFENVSIKAWVQVEPQNSTCWCRATSMNTISANPNSLPLQPIAN.

The Cytoplasmic portion of the chain corresponds to 1-6; sequence MNLQEL. The chain crosses the membrane as a helical span at residues 7–27; the sequence is LAKVPLLLSYPTIILSSNLIV. Residues 28-58 lie on the Lumenal side of the membrane; it reads PSHNDLISRAASTSAAEYADEKLIFFSTDHA. Residues 59-79 traverse the membrane as a helical segment; that stretch reads IRLIFLPTFVASSFNLFAHYF. The Cytoplasmic portion of the chain corresponds to 80 to 90; it reads NFINYSSRRKY. The chain crosses the membrane as a helical span at residues 91-111; that stretch reads YVLFTAIYFLSILTAIFHPIQ. The Lumenal segment spans residues 112–134; it reads STCITLLIIKLLTTADESSPKIA. Residues 135–155 form a helical membrane-spanning segment; sequence LNFKTILKTFVPFITLTLVIL. Topologically, residues 156–174 are cytoplasmic; it reads RWDPSFDASSGDVNKISTS. The helical transmembrane segment at 175 to 195 threads the bilayer; that stretch reads LAAYALLILTLRYASPLILST. Over 196–219 the chain is Lumenal; that stretch reads LSSSIGVVSKDTSVAQHSISRNKR. Residues 220–240 traverse the membrane as a helical segment; it reads FPLILVLPIFSFVLLYLMTIV. Residues 241–244 are Cytoplasmic-facing; it reads NKTY. The chain crosses the membrane as a helical span at residues 245-265; that stretch reads NIQLLMVFVFFGCLSIFFLSL. The Lumenal segment spans residues 266–298; that stretch reads KDLFTEDGNQKKGGQEDEYCRMFDIKYMISYLW. The chain crosses the membrane as a helical span at residues 299-319; the sequence is LTRFTILLTGIMAIVVHFLSF. Over 320-386 the chain is Cytoplasmic; that stretch reads NEITSSIKTD…KQMALNKDTR (67 aa). Residues 387 to 407 form a helical membrane-spanning segment; it reads SIFSFLLLNTAFMFVQLLYSF. Residues 408-417 are Lumenal-facing; the sequence is RSKSLGLLSD. The chain crosses the membrane as a helical span at residues 418-438; the sequence is SLHMALDCTSLLLGLIAGVLT. Over 439–453 the chain is Cytoplasmic; it reads KKPASDKFPFGLNYL. A helical transmembrane segment spans residues 454–474; it reads GTLAGFTNGVLLLGIVCGIFV. At 475-491 the chain is on the lumenal side; that stretch reads EAIERIFNPIHLHATNE. Residues 492–512 traverse the membrane as a helical segment; that stretch reads LLVVATLGLLVNLVGLFAFDH. Over 513-528 the chain is Cytoplasmic; it reads GAHDHGGTDNENMKGI. A helical membrane pass occupies residues 529-549; sequence FLHILADTLGSVGVVISTLLI. Over 550-563 the chain is Lumenal; that stretch reads KLTHWPIFDPIASL. Residues 564 to 584 form a helical membrane-spanning segment; that stretch reads LIGSLILLSALPLLKSTSANI. The Cytoplasmic segment spans residues 585 to 724; it reads LLRLDDKKHN…NSLPLQPIAN (140 aa). The tract at residues 614–653 is disordered; sequence TPRFWPTESGSSGHSHAHTHSHAENHSHEHHHDQKNGSQE. Over residues 634–648 the composition is skewed to basic and acidic residues; sequence SHAENHSHEHHHDQK.

It belongs to the cation diffusion facilitator (CDF) transporter (TC 2.A.4) family. SLC30A subfamily.

Its subcellular location is the endoplasmic reticulum membrane. It is found in the nucleus membrane. Functionally, probably act as a zinc ion transporter moving zinc from the nucleus/endoplasmic reticulum to the cytoplasm. Involved in zinc ion homeostasis and cellular distribution. The protein is Probable zinc transporter MSC2 (MSC2) of Saccharomyces cerevisiae (strain ATCC 204508 / S288c) (Baker's yeast).